Reading from the N-terminus, the 812-residue chain is Protein FAM83G (812 aa).

Position 2 is an N-acetylalanine (alanine 2). The DUF1669 stretch occupies residues 2–312 (AFSQVQCLDD…LYLMSQSVSL (311 aa)). Serine 4 bears the Phosphoserine mark. Positions 76 to 119 (PGSEDPRVSGRRPEPQDNGGADASEETSAAGGPPATETLPSLEY) are disordered. A compositionally biased stretch (basic and acidic residues) spans 79-90 (EDPRVSGRRPEP). Residues serine 124, serine 127, and serine 356 each carry the phosphoserine modification. 3 disordered regions span residues 362–389 (KSSSDKQEVTRPPGLRGPAVAERPGDLS), 455–509 (ASAQ…KPRT), and 521–812 (SDIG…HKEP). Residues 455–467 (ASAQHQLWKQSQG) show a composition bias toward polar residues. Positions 471-480 (CPAPCPPPAP) are enriched in pro residues. Positions 545–562 (STASESEVPQQQHSSMTQ) are enriched in polar residues. Positions 576–586 (LDEDEDDDDDY) are enriched in acidic residues. Low complexity predominate over residues 589 to 598 (LSDQDSLSGS). 4 positions are modified to phosphoserine: serine 609, serine 613, serine 615, and serine 649. Low complexity predominate over residues 721–731 (SSSKKASPAAA). Residues 761-772 (LRAELRATEEHA) show a composition bias toward basic and acidic residues.

This sequence belongs to the FAM83 family. In terms of assembly, interacts with SMAD1 (via MH2 domain); in a SMAD4-independent manner. Directly interacts (via DUF1669) with casein kinase isoforms CSNK1A1 and CSNK1A1L. In terms of processing, BMP signaling induces the phosphorylation by BMPR1A at Ser-609, Ser-613 and Ser-615. Phosphorylation at Ser-609 is necessary for the activation of SMAD4-independent BMP target genes such as NEDD9 and ASNS. Post-translationally, phosphorylated by CSNK1A1.

It is found in the cytoplasm. Its subcellular location is the cytosol. The protein resides in the nucleus. Functionally, substrate for type I BMP receptor kinase involved in regulation of some target genes of the BMP signaling pathway. Also regulates the expression of several non-BMP target genes, suggesting a role in other signaling pathways. This Mus musculus (Mouse) protein is Protein FAM83G (Fam83g).